Reading from the N-terminus, the 292-residue chain is Shikimate dehydrogenase (NADP(+)) (292 aa).

Residues 25–27 and threonine 72 contribute to the shikimate site; that span reads SKS. The Proton acceptor role is filled by lysine 76. Shikimate-binding residues include asparagine 97 and aspartate 113. NADP(+) is bound by residues 137 to 141, 161 to 166, and methionine 230; these read GAGGA and NRTQSK. Tyrosine 232 is a binding site for shikimate. Glycine 254 is an NADP(+) binding site.

It belongs to the shikimate dehydrogenase family. As to quaternary structure, homodimer.

It carries out the reaction shikimate + NADP(+) = 3-dehydroshikimate + NADPH + H(+). It participates in metabolic intermediate biosynthesis; chorismate biosynthesis; chorismate from D-erythrose 4-phosphate and phosphoenolpyruvate: step 4/7. Involved in the biosynthesis of the chorismate, which leads to the biosynthesis of aromatic amino acids. Catalyzes the reversible NADPH linked reduction of 3-dehydroshikimate (DHSA) to yield shikimate (SA). The chain is Shikimate dehydrogenase (NADP(+)) from Shewanella sp. (strain ANA-3).